The primary structure comprises 257 residues: Acetylglutamate kinase (257 aa).

Substrate-binding positions include 41-42 (GG), R63, and N158.

Belongs to the acetylglutamate kinase family. ArgB subfamily.

It localises to the cytoplasm. It carries out the reaction N-acetyl-L-glutamate + ATP = N-acetyl-L-glutamyl 5-phosphate + ADP. The protein operates within amino-acid biosynthesis; L-arginine biosynthesis; N(2)-acetyl-L-ornithine from L-glutamate: step 2/4. Catalyzes the ATP-dependent phosphorylation of N-acetyl-L-glutamate. The protein is Acetylglutamate kinase of Bacteroides thetaiotaomicron (strain ATCC 29148 / DSM 2079 / JCM 5827 / CCUG 10774 / NCTC 10582 / VPI-5482 / E50).